The chain runs to 511 residues: 2-methylbutanal oxime monooxygenase (511 aa).

2 helical membrane passes run Pro-10–Phe-30 and Ile-304–Phe-324. Residue Cys-451 participates in heme binding.

Belongs to the cytochrome P450 family. The cofactor is heme. Expressed in storage roots, primary roots, petioles and vascular tissues. Expressed in the outer cortex cells, the endodermis and around the xylem, phloem cells and laticifers.

It is found in the microsome membrane. It catalyses the reaction (1E,2S)-2-methylbutanal oxime + reduced [NADPH--hemoprotein reductase] + O2 = 2-hydroxy-2-methylbutanenitrile + oxidized [NADPH--hemoprotein reductase] + 2 H2O + H(+). The catalysed reaction is (E)-2-methylpropanal oxime + reduced [NADPH--hemoprotein reductase] + O2 = 2-hydroxy-2-methylpropanenitrile + oxidized [NADPH--hemoprotein reductase] + 2 H2O + H(+). Functionally, catalyzes the conversion of (E)-2-methylpropanal oxime (valox) to 2-hydroxy-2-methylpropanenitrile (acetone cyanohydrin) and of (E)-2-methylbutanal oxime (ilox) to 2-hydroxy-2-methylbutyronitrile. The reaction takes place in three steps. First, the oxime is isomerized to the (Z)- isomer, next the (Z)-isomer is dehydrated to the corresponding nitrile, followed by a C-hydroxylation of the nitrile. Can use both aliphatic and aromatic oximes as substrates. The chain is 2-methylbutanal oxime monooxygenase (CYP71E7) from Manihot esculenta (Cassava).